Reading from the N-terminus, the 116-residue chain is Cation channel sperm-associated auxiliary subunit TMEM262 (116 aa).

Residues 1-16 lie on the Cytoplasmic side of the membrane; that stretch reads MRWRDRIAVLCFPPGL. The helical transmembrane segment at 17–38 threads the bilayer; it reads MLTVAALILFFIHMGVFASDVH. Residues 39-51 lie on the Extracellular side of the membrane; the sequence is NFCVIHNYDHMSF. A helical transmembrane segment spans residues 52–72; that stretch reads RYTVVLIFSQVISIGWAAMGS. The Cytoplasmic portion of the chain corresponds to 73 to 84; it reads LYAEMTGDKFLR. The chain crosses the membrane as a helical span at residues 85-107; sequence CFALTILILNGAMFFNRLCLEFL. Residues 108 to 116 are Extracellular-facing; the sequence is AINYREERH.

As to quaternary structure, component of the CatSper complex or CatSpermasome composed of the core pore-forming members CATSPER1, CATSPER2, CATSPER3 and CATSPER4 as well as auxiliary members CATSPERB, CATSPERG, CATSPERD, CATSPERE, CATSPERZ, C2CD6/CATSPERT, SLCO6C1, TMEM249, TMEM262 and EFCAB9. HSPA1 may be an additional auxiliary complex member. The core complex members CATSPER1, CATSPER2, CATSPER3 and CATSPER4 form a heterotetrameric channel. The auxiliary CATSPERB, CATSPERG2, CATSPERD and CATSPERE subunits form a pavilion-like structure over the pore which stabilizes the complex through interactions with CATSPER4, CATSPER3, CATSPER1 and CATSPER2 respectively. SLCO6C1 interacts with CATSPERE and TMEM262/CATSPERH interacts with CATSPERB, further stabilizing the complex. C2CD6/CATSPERT interacts at least with CATSPERD and is required for targeting the CatSper complex in the flagellar membrane.

Its subcellular location is the cell projection. The protein resides in the cilium. It localises to the flagellum membrane. Functionally, auxiliary component of the CatSper complex, a complex involved in sperm cell hyperactivation. The polypeptide is Cation channel sperm-associated auxiliary subunit TMEM262 (Mus musculus (Mouse)).